Consider the following 813-residue polypeptide: Serine/threonine-protein kinase kin-29 (813 aa).

The region spanning 18–269 (YDVGRAIGKG…IQNVLAHRWM (252 aa)) is the Protein kinase domain. ATP contacts are provided by residues 24 to 32 (IGKGNFATV) and Lys-47. Asp-140 acts as the Proton acceptor in catalysis. Positions 383 to 412 (LSSPDCDSDDSSNSDLCDESPLSSLEPNHK) are disordered. Acidic residues predominate over residues 388–400 (CDSDDSSNSDLCD).

The protein belongs to the protein kinase superfamily. CAMK Ser/Thr protein kinase family. SNF1 subfamily. Interacts with tax-6. It depends on Mg(2+) as a cofactor. Autophosphorylated. Elevated cAMP levels appears to act via PKA to directly or indirectly phosphorylate multiple sites on kin-29 and inhibit function.

The protein localises to the cytoplasm. Its subcellular location is the nucleus. The enzyme catalyses L-seryl-[protein] + ATP = O-phospho-L-seryl-[protein] + ADP + H(+). It carries out the reaction L-threonyl-[protein] + ATP = O-phospho-L-threonyl-[protein] + ADP + H(+). Regulates chemoreceptor expression by phosphorylating the hda-4 class II histone deacetylase (HDAC) and inhibiting the gene repression functions of hda-4 and the mef-2 transcription factor, enabling the correct sensing and transduction of food signals. Role in determining body size, the dauer decision and serotonin-mediated egg laying. May modulate the Sma/Mab pathway and regulates development in the later larval stages. This chain is Serine/threonine-protein kinase kin-29, found in Caenorhabditis briggsae.